Here is a 190-residue protein sequence, read N- to C-terminus: Large ribosomal subunit protein bL25 (190 aa).

Positions 1–20 are disordered; sequence MSEQKTLSVQKRDNLGKGAN.

It belongs to the bacterial ribosomal protein bL25 family. CTC subfamily. As to quaternary structure, part of the 50S ribosomal subunit; part of the 5S rRNA/L5/L18/L25 subcomplex. Contacts the 5S rRNA. Binds to the 5S rRNA independently of L5 and L18.

This is one of the proteins that binds to the 5S RNA in the ribosome where it forms part of the central protuberance. The protein is Large ribosomal subunit protein bL25 of Nitratidesulfovibrio vulgaris (strain ATCC 29579 / DSM 644 / CCUG 34227 / NCIMB 8303 / VKM B-1760 / Hildenborough) (Desulfovibrio vulgaris).